A 225-amino-acid chain; its full sequence is MQIKWFGHSAFMVEAASLKLLIDPWVSNPLSPASPQEVAAAKPTHILITHDHFDHLGESVDIAKATGAPVVGTYELTLEVAEKGIPEAQTMPMNIGGTIKLGDGVEVYMTPALHTANRGAPSGFVIATPEGTVYHAGDTALFRDMELIGELYDIDVALLPIGSVFTMGPREAAIAVQLLRPRRVVPMHYNTFPLIRQDPEDFKARVEAVTRAKVYVMKPGDVLKL.

The protein belongs to the UPF0173 family.

This chain is UPF0173 metal-dependent hydrolase Pcal_1074, found in Pyrobaculum calidifontis (strain DSM 21063 / JCM 11548 / VA1).